The primary structure comprises 77 residues: Large ribosomal subunit protein uL29 (77 aa).

The protein belongs to the universal ribosomal protein uL29 family.

This Methanopyrus kandleri (strain AV19 / DSM 6324 / JCM 9639 / NBRC 100938) protein is Large ribosomal subunit protein uL29.